The sequence spans 718 residues: Polyribonucleotide nucleotidyltransferase (718 aa).

The Mg(2+) site is built by aspartate 506 and aspartate 512. The 61-residue stretch at 572–632 (PKLELFSVDP…EQIKAAKDYI (61 aa)) folds into the KH domain. An S1 motif domain is found at 657-718 (GQEFQGIVKK…NGKISVDLCE (62 aa)).

Belongs to the polyribonucleotide nucleotidyltransferase family. Mg(2+) is required as a cofactor.

It localises to the cytoplasm. The enzyme catalyses RNA(n+1) + phosphate = RNA(n) + a ribonucleoside 5'-diphosphate. Functionally, involved in mRNA degradation. Catalyzes the phosphorolysis of single-stranded polyribonucleotides processively in the 3'- to 5'-direction. In Campylobacter jejuni subsp. doylei (strain ATCC BAA-1458 / RM4099 / 269.97), this protein is Polyribonucleotide nucleotidyltransferase.